We begin with the raw amino-acid sequence, 267 residues long: 5'-nucleotidase SurE (267 aa).

A divalent metal cation is bound by residues Asp-9, Asp-10, Ser-40, and Asn-97.

The protein belongs to the SurE nucleotidase family. A divalent metal cation is required as a cofactor.

It is found in the cytoplasm. It carries out the reaction a ribonucleoside 5'-phosphate + H2O = a ribonucleoside + phosphate. In terms of biological role, nucleotidase that shows phosphatase activity on nucleoside 5'-monophosphates. The polypeptide is 5'-nucleotidase SurE (Helicobacter pylori (strain G27)).